The primary structure comprises 374 residues: Chaperone protein DnaJ (374 aa).

The 65-residue stretch at 4-68 folds into the J domain; it reads DYYDILGVSR…QMRGRYDQFG (65 aa). The CR-type zinc-finger motif lies at 133-215; the sequence is GGEQQIRISH…CGGRGQNQVS (83 aa). The Zn(2+) site is built by Cys-146, Cys-149, Cys-163, Cys-166, Cys-189, Cys-192, Cys-203, and Cys-206. 4 CXXCXGXG motif repeats span residues 146 to 153, 163 to 170, 189 to 196, and 203 to 210; these read CKTCEGTG, CSTCQGSG, CPTCNGQG, and CDSCGGRG.

It belongs to the DnaJ family. As to quaternary structure, homodimer. It depends on Zn(2+) as a cofactor.

Its subcellular location is the cytoplasm. Participates actively in the response to hyperosmotic and heat shock by preventing the aggregation of stress-denatured proteins and by disaggregating proteins, also in an autonomous, DnaK-independent fashion. Unfolded proteins bind initially to DnaJ; upon interaction with the DnaJ-bound protein, DnaK hydrolyzes its bound ATP, resulting in the formation of a stable complex. GrpE releases ADP from DnaK; ATP binding to DnaK triggers the release of the substrate protein, thus completing the reaction cycle. Several rounds of ATP-dependent interactions between DnaJ, DnaK and GrpE are required for fully efficient folding. Also involved, together with DnaK and GrpE, in the DNA replication of plasmids through activation of initiation proteins. The polypeptide is Chaperone protein DnaJ (Acaryochloris marina (strain MBIC 11017)).